We begin with the raw amino-acid sequence, 245 residues long: DNA polymerase sliding clamp 2 (245 aa).

The protein belongs to the PCNA family. As to quaternary structure, homotrimer. The subunits circularize to form a toroid; DNA passes through its center. Replication factor C (RFC) is required to load the toroid on the DNA.

Functionally, sliding clamp subunit that acts as a moving platform for DNA processing. Responsible for tethering the catalytic subunit of DNA polymerase and other proteins to DNA during high-speed replication. The protein is DNA polymerase sliding clamp 2 of Sulfolobus acidocaldarius (strain ATCC 33909 / DSM 639 / JCM 8929 / NBRC 15157 / NCIMB 11770).